A 337-amino-acid polypeptide reads, in one-letter code: UDP-glucose 4-epimerase (337 aa).

Residues 11–12, 31–36, 58–59, 80–84, N99, S124, Y149, K153, and F178 contribute to the NAD(+) site; these read YI, DNLSNA, DL, and FAGLK. Positions 124 and 149 each coordinate substrate. Residue Y149 is the Proton acceptor of the active site. Residues N179, 199 to 200, 216 to 218, R231, and 292 to 295 each bind substrate; these read NL, GIF, and RDGD.

Belongs to the NAD(P)-dependent epimerase/dehydratase family. As to quaternary structure, homodimer. NAD(+) is required as a cofactor.

The catalysed reaction is UDP-alpha-D-glucose = UDP-alpha-D-galactose. The protein operates within carbohydrate metabolism; galactose metabolism. Functionally, involved in the metabolism of galactose. Catalyzes the conversion of UDP-galactose (UDP-Gal) to UDP-glucose (UDP-Glc) through a mechanism involving the transient reduction of NAD. The chain is UDP-glucose 4-epimerase (galE) from Erwinia amylovora (Fire blight bacteria).